Here is a 341-residue protein sequence, read N- to C-terminus: Ferrochelatase (341 aa).

2 residues coordinate Fe cation: H189 and E293.

Belongs to the ferrochelatase family.

It localises to the cytoplasm. It catalyses the reaction heme b + 2 H(+) = protoporphyrin IX + Fe(2+). Its pathway is porphyrin-containing compound metabolism; protoheme biosynthesis; protoheme from protoporphyrin-IX: step 1/1. Catalyzes the ferrous insertion into protoporphyrin IX. This Pseudomonas fluorescens (strain Pf0-1) protein is Ferrochelatase.